The primary structure comprises 296 residues: Acetylglutamate kinase (296 aa).

Residues 69-70, Arg-91, and Asn-193 each bind substrate; that span reads GG.

Belongs to the acetylglutamate kinase family. ArgB subfamily.

The protein resides in the cytoplasm. The catalysed reaction is N-acetyl-L-glutamate + ATP = N-acetyl-L-glutamyl 5-phosphate + ADP. Its pathway is amino-acid biosynthesis; L-arginine biosynthesis; N(2)-acetyl-L-ornithine from L-glutamate: step 2/4. Catalyzes the ATP-dependent phosphorylation of N-acetyl-L-glutamate. The chain is Acetylglutamate kinase from Paracidovorax citrulli (strain AAC00-1) (Acidovorax citrulli).